A 126-amino-acid chain; its full sequence is Fluoride-specific ion channel FluC (126 aa).

Helical transmembrane passes span 4–24 (LLLV…TSAW), 36–56 (GTLL…TASL), 67–85 (LFLA…SFNY), and 101–121 (AYLL…TLLV). 2 residues coordinate Na(+): G75 and T78.

This sequence belongs to the fluoride channel Fluc/FEX (TC 1.A.43) family.

Its subcellular location is the cell inner membrane. The enzyme catalyses fluoride(in) = fluoride(out). Na(+) is not transported, but it plays an essential structural role and its presence is essential for fluoride channel function. Its function is as follows. Fluoride-specific ion channel. Important for reducing fluoride concentration in the cell, thus reducing its toxicity. The polypeptide is Fluoride-specific ion channel FluC (Anaeromyxobacter sp. (strain K)).